Reading from the N-terminus, the 400-residue chain is Autophagy-related protein 18 (400 aa).

WD repeat units follow at residues Ala-163–Gln-203 and Ser-208–Asp-247. The L/FRRG motif signature appears at Phe-204–Ser-208. The interval His-241–His-296 is disordered. Basic and acidic residues predominate over residues Asp-256–Ala-268. The span at Ser-270–Thr-284 shows a compositional bias: polar residues. 2 WD repeats span residues Lys-295–Arg-341 and Ser-353–Gly-393.

Belongs to the WD repeat PROPPIN family. As to quaternary structure, component of the PI(3,5)P2 regulatory complex.

It is found in the preautophagosomal structure membrane. The protein localises to the vacuole membrane. Its subcellular location is the endosome membrane. Its function is as follows. The PI(3,5)P2 regulatory complex regulates both the synthesis and turnover of phosphatidylinositol 3,5-bisphosphate (PtdIns(3,5)P2). Necessary for proper vacuole morphology. Plays an important role in osmotically-induced vacuole fragmentation. Required for cytoplasm to vacuole transport (Cvt) vesicle formation, pexophagy and starvation-induced autophagy. Involved in correct ATG9 trafficking to the pre-autophagosomal structure. Might also be involved in premeiotic DNA replication. The chain is Autophagy-related protein 18 (ATG18) from Ajellomyces capsulatus (strain NAm1 / WU24) (Darling's disease fungus).